Consider the following 267-residue polypeptide: Serine/arginine-rich splicing factor 7 (267 aa).

Positions 40-113 constitute an RRM domain; that stretch reads TKVYVGNLGT…SRVRVELSTG (74 aa). Position 53 is an N6-acetyllysine; alternate (Lys-53). Residue Lys-53 forms a Glycyl lysine isopeptide (Lys-Gly) (interchain with G-Cter in SUMO2); alternate linkage. The residue at position 61 (Ser-61) is a Phosphoserine. Residues 110–127 form a sufficient for interaction with NXF1 region; it reads LSTGMPRRSRFDRPPARR. Residues 133–150 form a CCHC-type zinc finger; that stretch reads DRCYECGEKGHYAYDCHR. The segment covering 152-209 has biased composition (basic residues); the sequence is SRRRRSRSRSRSHSRSRGRRYSRSRSRSRGRRSRSASPRRSRSVSLRRSRSASLRRSR. The segment at 152 to 267 is disordered; the sequence is SRRRRSRSRS…HRSASPERMD (116 aa). 4 tandem repeats follow at residues 182 to 189, 190 to 197, 198 to 205, and 206 to 213. The tract at residues 182-255 is 6 X 8 AA repeats of R-R-S-R-S-X-S-X; sequence RRSRSASPRR…SPKRSRSPSG (74 aa). 3 positions are modified to phosphoserine: Ser-192, Ser-194, and Ser-196. Residues Ser-210, Ser-212, Ser-221, Ser-223, and Ser-225 each carry the phosphoserine modification. Basic residues predominate over residues 223 to 251; the sequence is SRSRSRSRSISRPRSSRSKSRSPSPKRSR. The 5; approximate repeat unit spans residues 240-247; sequence SKSRSPSP. The 6; approximate repeat unit spans residues 248–255; sequence KRSRSPSG. Phosphoserine occurs at positions 260 and 262.

It belongs to the splicing factor SR family. Found in large molecular weight complexes containing CCNL1 and the p110 isoforms of either CDC2L1 or CDC2L2. Interacts with CCNL2 and CPSF6. Interacts with NXF1. Interacts with YTHDC1. Extensively phosphorylated on serine residues in the RS domain.

The protein localises to the nucleus. It localises to the cytoplasm. Functionally, required for pre-mRNA splicing. Represses the splicing of MAPT/Tau exon 10. May function as export adapter involved in mRNA nuclear export such as of histone H2A. Binds mRNA which is thought to be transferred to the NXF1-NXT1 heterodimer for export (TAP/NXF1 pathway); enhances NXF1-NXT1 RNA-binding activity. RNA-binding is semi-sequence specific. This chain is Serine/arginine-rich splicing factor 7 (Srsf7), found in Mus musculus (Mouse).